The following is a 442-amino-acid chain: Tyrosine--tRNA ligase (442 aa).

An L-tyrosine-binding site is contributed by Y55. Residues 60–69 (PTAPSLHLGN) carry the 'HIGH' region motif. Y190 and Q194 together coordinate L-tyrosine. Positions 250 to 254 (KFGKS) match the 'KMSKS' region motif. K253 provides a ligand contact to ATP. One can recognise an S4 RNA-binding domain in the interval 373-438 (VAIAQALVDT…GKKTLAGVFV (66 aa)).

Belongs to the class-I aminoacyl-tRNA synthetase family. TyrS type 1 subfamily. As to quaternary structure, homodimer.

It is found in the cytoplasm. It catalyses the reaction tRNA(Tyr) + L-tyrosine + ATP = L-tyrosyl-tRNA(Tyr) + AMP + diphosphate + H(+). Catalyzes the attachment of tyrosine to tRNA(Tyr) in a two-step reaction: tyrosine is first activated by ATP to form Tyr-AMP and then transferred to the acceptor end of tRNA(Tyr). This Leifsonia xyli subsp. xyli (strain CTCB07) protein is Tyrosine--tRNA ligase.